Here is a 339-residue protein sequence, read N- to C-terminus: MNQSNASMTVIGAGSYGTALAITLARNGHQVVLWGHDPKHVATLERDRCNVAFLPDVPFPDTLRLESDLATALAASRNILVVVPSHVFGEVLRQIKPLMRPDARLVWATKGLEAETGRLLQDVAREALGDDIPLAVISGPTFAKELAAGLPTAISLASTDETFADDLQELLHCGKSFRVYSNPDFIGVQLGGAVKNVIAIGAGMSDGIGFGANARTALITRGLTEMSRLGAALGADPTTFMGMAGLGDLVLTCTDNQSRNRRFGMMLGQGMDVQSAQDKIGQVVEGYRNTKEVRELAHRFGVEMPITEEIYQVLYCGKNAREAALTLLGRARKDERSRH.

The NADPH site is built by Ser15, Tyr16, His36, and Lys110. Sn-glycerol 3-phosphate-binding residues include Lys110, Gly139, and Thr141. Residue Ala143 participates in NADPH binding. Positions 195, 248, 258, 259, and 260 each coordinate sn-glycerol 3-phosphate. Catalysis depends on Lys195, which acts as the Proton acceptor. Arg259 is a binding site for NADPH. 2 residues coordinate NADPH: Val283 and Glu285.

Belongs to the NAD-dependent glycerol-3-phosphate dehydrogenase family.

Its subcellular location is the cytoplasm. It carries out the reaction sn-glycerol 3-phosphate + NAD(+) = dihydroxyacetone phosphate + NADH + H(+). The catalysed reaction is sn-glycerol 3-phosphate + NADP(+) = dihydroxyacetone phosphate + NADPH + H(+). It functions in the pathway membrane lipid metabolism; glycerophospholipid metabolism. Catalyzes the reduction of the glycolytic intermediate dihydroxyacetone phosphate (DHAP) to sn-glycerol 3-phosphate (G3P), the key precursor for phospholipid synthesis. The polypeptide is Glycerol-3-phosphate dehydrogenase [NAD(P)+] (Citrobacter koseri (strain ATCC BAA-895 / CDC 4225-83 / SGSC4696)).